We begin with the raw amino-acid sequence, 399 residues long: Imidazolonepropionase (399 aa).

The span at 1-13 (MSETLYTGISQLA) shows a compositional bias: polar residues. The interval 1–20 (MSETLYTGISQLATPRPGPQ) is disordered. Fe(3+) contacts are provided by His74 and His76. Zn(2+)-binding residues include His74 and His76. 4-imidazolone-5-propanoate contacts are provided by Arg83, Tyr146, and His176. Tyr146 contributes to the N-formimidoyl-L-glutamate binding site. His238 serves as a coordination point for Fe(3+). His238 contacts Zn(2+). Residue Gln241 participates in 4-imidazolone-5-propanoate binding. Asp312 provides a ligand contact to Fe(3+). Zn(2+) is bound at residue Asp312. 2 residues coordinate N-formimidoyl-L-glutamate: Asn314 and Gly316. Ser317 contacts 4-imidazolone-5-propanoate.

The protein belongs to the metallo-dependent hydrolases superfamily. HutI family. Requires Zn(2+) as cofactor. The cofactor is Fe(3+).

The protein localises to the cytoplasm. The enzyme catalyses 4-imidazolone-5-propanoate + H2O = N-formimidoyl-L-glutamate. The protein operates within amino-acid degradation; L-histidine degradation into L-glutamate; N-formimidoyl-L-glutamate from L-histidine: step 3/3. Catalyzes the hydrolytic cleavage of the carbon-nitrogen bond in imidazolone-5-propanoate to yield N-formimidoyl-L-glutamate. It is the third step in the universal histidine degradation pathway. This Deinococcus radiodurans (strain ATCC 13939 / DSM 20539 / JCM 16871 / CCUG 27074 / LMG 4051 / NBRC 15346 / NCIMB 9279 / VKM B-1422 / R1) protein is Imidazolonepropionase.